The chain runs to 126 residues: Glycine cleavage system H protein (126 aa).

The 83-residue stretch at 24–106 folds into the Lipoyl-binding domain; it reads TVTVGITDHA…YGEGWMYRIK (83 aa). N6-lipoyllysine is present on Lys65.

Belongs to the GcvH family. The glycine cleavage system is composed of four proteins: P, T, L and H. Requires (R)-lipoate as cofactor.

Its function is as follows. The glycine cleavage system catalyzes the degradation of glycine. The H protein shuttles the methylamine group of glycine from the P protein to the T protein. In Psychrobacter sp. (strain PRwf-1), this protein is Glycine cleavage system H protein.